Here is a 341-residue protein sequence, read N- to C-terminus: Anthranilate phosphoribosyltransferase (341 aa).

Residues G79, 82–83, T87, 89–92, 107–115, and S119 contribute to the 5-phospho-alpha-D-ribose 1-diphosphate site; these read GD, NIST, and KHGNRAVSS. Position 79 (G79) interacts with anthranilate. A Mg(2+)-binding site is contributed by S91. Residue N110 participates in anthranilate binding. Residue R165 participates in anthranilate binding. Positions 224 and 225 each coordinate Mg(2+).

This sequence belongs to the anthranilate phosphoribosyltransferase family. As to quaternary structure, homodimer. Mg(2+) is required as a cofactor.

The enzyme catalyses N-(5-phospho-beta-D-ribosyl)anthranilate + diphosphate = 5-phospho-alpha-D-ribose 1-diphosphate + anthranilate. It participates in amino-acid biosynthesis; L-tryptophan biosynthesis; L-tryptophan from chorismate: step 2/5. Catalyzes the transfer of the phosphoribosyl group of 5-phosphorylribose-1-pyrophosphate (PRPP) to anthranilate to yield N-(5'-phosphoribosyl)-anthranilate (PRA). This Bacillus cereus (strain B4264) protein is Anthranilate phosphoribosyltransferase.